Here is a 603-residue protein sequence, read N- to C-terminus: Aspartate--tRNA(Asp/Asn) ligase (603 aa).

Residue glutamate 182 coordinates L-aspartate. The aspartate stretch occupies residues glutamine 206–lysine 209. Residue arginine 228 coordinates L-aspartate. ATP is bound by residues arginine 228–glutamate 230 and glutamine 237. Position 454 (histidine 454) interacts with L-aspartate. Glutamate 500 is an ATP binding site. Arginine 507 lines the L-aspartate pocket. Glycine 552–arginine 555 contributes to the ATP binding site.

Belongs to the class-II aminoacyl-tRNA synthetase family. Type 1 subfamily. In terms of assembly, homodimer.

The protein localises to the cytoplasm. It catalyses the reaction tRNA(Asx) + L-aspartate + ATP = L-aspartyl-tRNA(Asx) + AMP + diphosphate. Aspartyl-tRNA synthetase with relaxed tRNA specificity since it is able to aspartylate not only its cognate tRNA(Asp) but also tRNA(Asn). Reaction proceeds in two steps: L-aspartate is first activated by ATP to form Asp-AMP and then transferred to the acceptor end of tRNA(Asp/Asn). This is Aspartate--tRNA(Asp/Asn) ligase from Aquifex aeolicus (strain VF5).